A 1403-amino-acid polypeptide reads, in one-letter code: DNA-directed RNA polymerase subunit beta' (1403 aa).

Zn(2+) is bound by residues C71, C73, C86, and C89. Positions 462, 464, and 466 each coordinate Mg(2+). C820, C893, C900, and C903 together coordinate Zn(2+).

The protein belongs to the RNA polymerase beta' chain family. In terms of assembly, the RNAP catalytic core consists of 2 alpha, 1 beta, 1 beta' and 1 omega subunit. When a sigma factor is associated with the core the holoenzyme is formed, which can initiate transcription. The cofactor is Mg(2+). Zn(2+) serves as cofactor.

It catalyses the reaction RNA(n) + a ribonucleoside 5'-triphosphate = RNA(n+1) + diphosphate. DNA-dependent RNA polymerase catalyzes the transcription of DNA into RNA using the four ribonucleoside triphosphates as substrates. The chain is DNA-directed RNA polymerase subunit beta' from Methylobacterium radiotolerans (strain ATCC 27329 / DSM 1819 / JCM 2831 / NBRC 15690 / NCIMB 10815 / 0-1).